Consider the following 155-residue polypeptide: MGASVKPAARRNARQFALQAIYSWQITKENVATIEEQFLSGDKYDEEELRASEPALAAPETDVAYFRELLSGVVLSHAELDSKIRPYVSRPMQDLDMMELALLRLAMYEMTRREDVPYKVVINEAIELAKVFAAEDSHKFVNGVLDKAAPHVRKK.

This sequence belongs to the NusB family.

Its function is as follows. Involved in transcription antitermination. Required for transcription of ribosomal RNA (rRNA) genes. Binds specifically to the boxA antiterminator sequence of the ribosomal RNA (rrn) operons. This is Transcription antitermination protein NusB from Vibrio parahaemolyticus serotype O3:K6 (strain RIMD 2210633).